The sequence spans 395 residues: Argininosuccinate synthase (395 aa).

8 to 16 (AYSGGLDTS) is an ATP binding site. Residues Tyr86 and Ser91 each contribute to the L-citrulline site. ATP is bound at residue Gly116. Positions 118, 122, and 123 each coordinate L-aspartate. Asn122 contacts L-citrulline. Positions 126, 172, 181, 257, and 269 each coordinate L-citrulline.

The protein belongs to the argininosuccinate synthase family. Type 1 subfamily. As to quaternary structure, homotetramer.

The protein localises to the cytoplasm. The catalysed reaction is L-citrulline + L-aspartate + ATP = 2-(N(omega)-L-arginino)succinate + AMP + diphosphate + H(+). Its pathway is amino-acid biosynthesis; L-arginine biosynthesis; L-arginine from L-ornithine and carbamoyl phosphate: step 2/3. This chain is Argininosuccinate synthase, found in Methanosarcina barkeri (strain Fusaro / DSM 804).